We begin with the raw amino-acid sequence, 222 residues long: Cytidylate kinase (222 aa).

7–15 (GPSASGKSS) contributes to the ATP binding site.

Belongs to the cytidylate kinase family. Type 1 subfamily.

Its subcellular location is the cytoplasm. The enzyme catalyses CMP + ATP = CDP + ADP. It catalyses the reaction dCMP + ATP = dCDP + ADP. This is Cytidylate kinase from Borrelia turicatae (strain 91E135).